Consider the following 278-residue polypeptide: Alcohol dehydrogenase-related 31 kDa protein (278 aa).

Residue 11–34 (YVADCGGIALETSKVLMTKNIAKL) coordinates NAD(+). Ser-139 contributes to the substrate binding site. The active-site Proton acceptor is the Tyr-152.

The protein belongs to the short-chain dehydrogenases/reductases (SDR) family.

The chain is Alcohol dehydrogenase-related 31 kDa protein (Adhr) from Drosophila persimilis (Fruit fly).